A 394-amino-acid polypeptide reads, in one-letter code: Subtilisin-like protease 4 (394 aa).

The first 17 residues, 1-17, serve as a signal peptide directing secretion; it reads CLKTLSVFLAAFAAADA. The propeptide occupies 18–116; that stretch reads RAVFKTQGHK…VEQDQVVRIS (99 aa). Residues 36–115 enclose the Inhibitor I9 domain; sequence YIVVMKDGVS…YVEQDQVVRI (80 aa). N-linked (GlcNAc...) asparagine glycosylation is present at asparagine 100. Positions 126–394 constitute a Peptidase S8 domain; sequence SWGLGRVSHR…STTNRLLYNG (269 aa). Active-site charge relay system residues include aspartate 158 and histidine 189. 2 N-linked (GlcNAc...) asparagine glycosylation sites follow: asparagine 250 and asparagine 306. Serine 344 functions as the Charge relay system in the catalytic mechanism.

It belongs to the peptidase S8 family.

It is found in the secreted. Functionally, secreted subtilisin-like serine protease with keratinolytic activity that contributes to pathogenicity. The sequence is that of Subtilisin-like protease 4 (SUB4) from Trichophyton equinum (Horse ringworm fungus).